The chain runs to 255 residues: Putative oxidoreductase YtkK (255 aa).

Position 7–14 (7–14 (TAGSKGLG)) interacts with NAD(+).

This sequence belongs to the short-chain dehydrogenases/reductases (SDR) family.

The chain is Putative oxidoreductase YtkK (ytkK) from Bacillus subtilis (strain 168).